The chain runs to 258 residues: Imidazole glycerol phosphate synthase subunit HisF (258 aa).

Residues D11 and D130 contribute to the active site.

It belongs to the HisA/HisF family. As to quaternary structure, heterodimer of HisH and HisF.

The protein resides in the cytoplasm. It catalyses the reaction 5-[(5-phospho-1-deoxy-D-ribulos-1-ylimino)methylamino]-1-(5-phospho-beta-D-ribosyl)imidazole-4-carboxamide + L-glutamine = D-erythro-1-(imidazol-4-yl)glycerol 3-phosphate + 5-amino-1-(5-phospho-beta-D-ribosyl)imidazole-4-carboxamide + L-glutamate + H(+). It participates in amino-acid biosynthesis; L-histidine biosynthesis; L-histidine from 5-phospho-alpha-D-ribose 1-diphosphate: step 5/9. Its function is as follows. IGPS catalyzes the conversion of PRFAR and glutamine to IGP, AICAR and glutamate. The HisF subunit catalyzes the cyclization activity that produces IGP and AICAR from PRFAR using the ammonia provided by the HisH subunit. The chain is Imidazole glycerol phosphate synthase subunit HisF from Haemophilus influenzae (strain PittEE).